The following is a 445-amino-acid chain: MTTILKSLPKGENVGIAFSGGLDTSAALLWMKQKGAKVFAYTANLGQPDEADYDAIPRKAMEFGAEKARLVDCRTQLVHEGIAAIQAGAFHVSTGGIAYFNTTPLGRAVTGTMLVSAMKEDGVNIWGDGSTYKGNDIERFYRYGLLTNPALRIYKPWLDQQFIDELGGRAEMSAFMTSHGFAYKMSAEKAYSTDSNLLGATHEAKDLEHLDSGIKIVNPIMGVPFWRDDCAVKAEAVTVRFEEGQPVALNGQTFTDPVAMFYEANAIGGRHGLGMSDQIENRIIEAKSRGIYEAPGMALLHIAYERLVTGIHNEDTIEQYRINGMKLGRLLYQGRWFDSQALMLRETAQRWVARAVTGEVTLELRRGNDYSILNTVSPNLTYAPERLSMEKVEDAPFTPADRIGQLTMRNLDITDTRAKLGLYAKTGLLSSGEGTPIPQLENDKG.

ATP-binding positions include 17 to 25 (AFSGGLDTS) and Ala-43. L-citrulline is bound at residue Tyr-99. ATP is bound by residues Gly-129 and Thr-131. 3 residues coordinate L-aspartate: Thr-131, Asn-135, and Asp-136. Residue Asn-135 participates in L-citrulline binding. Asp-136 is a binding site for ATP. Arg-139 and Ser-192 together coordinate L-citrulline. Asp-194 lines the ATP pocket. L-citrulline is bound by residues Thr-201, Glu-203, and Glu-280.

It belongs to the argininosuccinate synthase family. Type 2 subfamily. In terms of assembly, homotetramer.

The protein resides in the cytoplasm. The enzyme catalyses L-citrulline + L-aspartate + ATP = 2-(N(omega)-L-arginino)succinate + AMP + diphosphate + H(+). It functions in the pathway amino-acid biosynthesis; L-arginine biosynthesis; L-arginine from L-ornithine and carbamoyl phosphate: step 2/3. In Rhodopseudomonas palustris (strain ATCC BAA-98 / CGA009), this protein is Argininosuccinate synthase.